Here is a 174-residue protein sequence, read N- to C-terminus: Shikimate kinase 2 (174 aa).

12–17 (GCGKTT) is a binding site for ATP. Mg(2+) is bound by residues T16 and D32. Substrate-binding residues include D34, R58, and G79. Residues 112-126 (QAAPEEDLRPTLTGK) form an LID domain region. Position 120 (R120) interacts with ATP. A substrate-binding site is contributed by R139.

The protein belongs to the shikimate kinase family. AroL subfamily. As to quaternary structure, monomer. It depends on Mg(2+) as a cofactor.

The protein localises to the cytoplasm. The enzyme catalyses shikimate + ATP = 3-phosphoshikimate + ADP + H(+). The protein operates within metabolic intermediate biosynthesis; chorismate biosynthesis; chorismate from D-erythrose 4-phosphate and phosphoenolpyruvate: step 5/7. In terms of biological role, catalyzes the specific phosphorylation of the 3-hydroxyl group of shikimic acid using ATP as a cosubstrate. This is Shikimate kinase 2 from Shigella dysenteriae serotype 1 (strain Sd197).